The sequence spans 235 residues: Probable RNA 2'-phosphotransferase (235 aa).

Belongs to the KptA/TPT1 family.

In terms of biological role, removes the 2'-phosphate from RNA via an intermediate in which the phosphate is ADP-ribosylated by NAD followed by a presumed transesterification to release the RNA and generate ADP-ribose 1''-2''-cyclic phosphate (APPR&gt;P). May function as an ADP-ribosylase. The sequence is that of Probable RNA 2'-phosphotransferase from Thermoplasma volcanium (strain ATCC 51530 / DSM 4299 / JCM 9571 / NBRC 15438 / GSS1).